The chain runs to 125 residues: Succinate dehydrogenase assembly factor 3, mitochondrial (125 aa).

A mitochondrion-targeting transit peptide spans 1-30 (MPGKHVSRVRALYRRILLLHRALPPDLKAL).

This sequence belongs to the complex I LYR family. SDHAF3 subfamily. Interacts with Sdhb within an Sdha-Sdhb subcomplex.

The protein resides in the mitochondrion matrix. Its function is as follows. Plays an essential role in the assembly of succinate dehydrogenase (SDH), an enzyme complex (also referred to as respiratory complex II) that is a component of both the tricarboxylic acid (TCA) cycle and the mitochondrial electron transport chain, and which couples the oxidation of succinate to fumarate with the reduction of ubiquinone (coenzyme Q) to ubiquinol. Promotes maturation of the iron-sulfur protein subunit Sdhb of the SDH catalytic dimer, protecting it from the deleterious effects of oxidants. May act together with SDHAF1. The sequence is that of Succinate dehydrogenase assembly factor 3, mitochondrial from Mus musculus (Mouse).